Reading from the N-terminus, the 252-residue chain is Ubiquinone biosynthesis protein COQ4 homolog 1, mitochondrial (252 aa).

Zn(2+) contacts are provided by His-130, Asp-131, His-134, and Glu-146.

Belongs to the COQ4 family. Component of a multi-subunit COQ enzyme complex. Zn(2+) is required as a cofactor.

Its subcellular location is the mitochondrion inner membrane. The enzyme catalyses a 4-hydroxy-3-methoxy-5-(all-trans-polyprenyl)benzoate + H(+) = a 2-methoxy-6-(all-trans-polyprenyl)phenol + CO2. Its pathway is cofactor biosynthesis; ubiquinone biosynthesis. Functionally, lyase that catalyzes the C1-decarboxylation of 4-hydroxy-3-methoxy-5-(all-trans-polyprenyl)benzoic acid into 2-methoxy-6-(all-trans-polyprenyl)phenol during ubiquinone biosynthesis. The protein is Ubiquinone biosynthesis protein COQ4 homolog 1, mitochondrial of Trypanosoma cruzi (strain CL Brener).